The following is a 150-amino-acid chain: MRCPYCQFEDTRVIDSRLASEGEQVRRRRECNRCGERFTTYETAELALPRIVKRDGTREPWDEGKLRQGMLRALEKRPVATEAVEAALFRIRQRLRATGEREVSASQLGEWVMEELRELDQVAYVRFASVYRSFEDVSAFREVIEGLEKR.

The segment at 3–34 (CPYCQFEDTRVIDSRLASEGEQVRRRRECNRC) is a zinc-finger region. The ATP-cone domain maps to 49–139 (PRIVKRDGTR…VYRSFEDVSA (91 aa)).

Belongs to the NrdR family. The cofactor is Zn(2+).

Its function is as follows. Negatively regulates transcription of bacterial ribonucleotide reductase nrd genes and operons by binding to NrdR-boxes. The chain is Transcriptional repressor NrdR from Alkalilimnicola ehrlichii (strain ATCC BAA-1101 / DSM 17681 / MLHE-1).